Consider the following 174-residue polypeptide: 3-hydroxydecanoyl-[acyl-carrier-protein] dehydratase (174 aa).

Residue His-73 is part of the active site.

The protein belongs to the thioester dehydratase family. FabA subfamily. In terms of assembly, homodimer.

It localises to the cytoplasm. It carries out the reaction a (3R)-hydroxyacyl-[ACP] = a (2E)-enoyl-[ACP] + H2O. The catalysed reaction is (3R)-hydroxydecanoyl-[ACP] = (2E)-decenoyl-[ACP] + H2O. The enzyme catalyses (2E)-decenoyl-[ACP] = (3Z)-decenoyl-[ACP]. The protein operates within lipid metabolism; fatty acid biosynthesis. Necessary for the introduction of cis unsaturation into fatty acids. Catalyzes the dehydration of (3R)-3-hydroxydecanoyl-ACP to E-(2)-decenoyl-ACP and then its isomerization to Z-(3)-decenoyl-ACP. Can catalyze the dehydratase reaction for beta-hydroxyacyl-ACPs with saturated chain lengths up to 16:0, being most active on intermediate chain length. This is 3-hydroxydecanoyl-[acyl-carrier-protein] dehydratase from Teredinibacter turnerae (strain ATCC 39867 / T7901).